Here is a 172-residue protein sequence, read N- to C-terminus: uncharacterized protein (172 aa).

It belongs to the flavoredoxin family. Requires FMN as cofactor.

This is an uncharacterized protein from Pyrococcus abyssi (strain GE5 / Orsay).